Here is a 121-residue protein sequence, read N- to C-terminus: Small ribosomal subunit protein uS13 (121 aa).

The disordered stretch occupies residues 91–121 (HRRGLPVRGQNTKNNARTRKGPRKTVANKKK). Positions 106–121 (ARTRKGPRKTVANKKK) are enriched in basic residues.

Belongs to the universal ribosomal protein uS13 family. In terms of assembly, part of the 30S ribosomal subunit. Forms a loose heterodimer with protein S19. Forms two bridges to the 50S subunit in the 70S ribosome.

Its function is as follows. Located at the top of the head of the 30S subunit, it contacts several helices of the 16S rRNA. In the 70S ribosome it contacts the 23S rRNA (bridge B1a) and protein L5 of the 50S subunit (bridge B1b), connecting the 2 subunits; these bridges are implicated in subunit movement. Contacts the tRNAs in the A and P-sites. This chain is Small ribosomal subunit protein uS13, found in Lysinibacillus sphaericus (strain C3-41).